A 337-amino-acid polypeptide reads, in one-letter code: Ornithine carbamoyltransferase (337 aa).

Residues 56 to 59 (STRT), Gln83, Arg107, and 134 to 137 (HPTQ) each bind carbamoyl phosphate. Residues Asn168, Asp232, and 236-237 (SM) each bind L-ornithine. Residues 274 to 275 (CL) and Arg320 each bind carbamoyl phosphate.

It belongs to the aspartate/ornithine carbamoyltransferase superfamily. OTCase family.

The protein localises to the cytoplasm. The catalysed reaction is carbamoyl phosphate + L-ornithine = L-citrulline + phosphate + H(+). The protein operates within amino-acid biosynthesis; L-arginine biosynthesis; L-arginine from L-ornithine and carbamoyl phosphate: step 1/3. Functionally, reversibly catalyzes the transfer of the carbamoyl group from carbamoyl phosphate (CP) to the N(epsilon) atom of ornithine (ORN) to produce L-citrulline. This Shigella flexneri protein is Ornithine carbamoyltransferase (argI).